We begin with the raw amino-acid sequence, 438 residues long: Serine--tRNA ligase (438 aa).

Residue 245-247 (TAE) coordinates L-serine. 276 to 278 (RSE) serves as a coordination point for ATP. Residue Glu299 coordinates L-serine. 363–366 (EISS) lines the ATP pocket. Ser398 contacts L-serine.

The protein belongs to the class-II aminoacyl-tRNA synthetase family. Type-1 seryl-tRNA synthetase subfamily. In terms of assembly, homodimer. The tRNA molecule binds across the dimer.

Its subcellular location is the cytoplasm. It catalyses the reaction tRNA(Ser) + L-serine + ATP = L-seryl-tRNA(Ser) + AMP + diphosphate + H(+). The catalysed reaction is tRNA(Sec) + L-serine + ATP = L-seryl-tRNA(Sec) + AMP + diphosphate + H(+). Its pathway is aminoacyl-tRNA biosynthesis; selenocysteinyl-tRNA(Sec) biosynthesis; L-seryl-tRNA(Sec) from L-serine and tRNA(Sec): step 1/1. Its function is as follows. Catalyzes the attachment of serine to tRNA(Ser). Is also able to aminoacylate tRNA(Sec) with serine, to form the misacylated tRNA L-seryl-tRNA(Sec), which will be further converted into selenocysteinyl-tRNA(Sec). The protein is Serine--tRNA ligase of Delftia acidovorans (strain DSM 14801 / SPH-1).